A 427-amino-acid polypeptide reads, in one-letter code: Gamma-glutamyl phosphate reductase (427 aa).

This sequence belongs to the gamma-glutamyl phosphate reductase family.

The protein localises to the cytoplasm. It carries out the reaction L-glutamate 5-semialdehyde + phosphate + NADP(+) = L-glutamyl 5-phosphate + NADPH + H(+). It functions in the pathway amino-acid biosynthesis; L-proline biosynthesis; L-glutamate 5-semialdehyde from L-glutamate: step 2/2. Functionally, catalyzes the NADPH-dependent reduction of L-glutamate 5-phosphate into L-glutamate 5-semialdehyde and phosphate. The product spontaneously undergoes cyclization to form 1-pyrroline-5-carboxylate. This chain is Gamma-glutamyl phosphate reductase, found in Brucella anthropi (strain ATCC 49188 / DSM 6882 / CCUG 24695 / JCM 21032 / LMG 3331 / NBRC 15819 / NCTC 12168 / Alc 37) (Ochrobactrum anthropi).